We begin with the raw amino-acid sequence, 192 residues long: LOB domain-containing protein 32 (192 aa).

The LOB domain occupies 4 to 105 (NRCAVCKILN…QDIESAVNEL (102 aa)).

It belongs to the LOB domain-containing protein family.

The protein is LOB domain-containing protein 32 (LBD32) of Arabidopsis thaliana (Mouse-ear cress).